The sequence spans 349 residues: Divinyl chlorophyll a/b light-harvesting protein PcbA (349 aa).

Transmembrane regions (helical) follow at residues 27–47 (FIAA…AFTL), 57–77 (VPMG…GIGF), 89–109 (VVAV…GGLM), 202–222 (VMGG…FHIA), 242–262 (AILS…AFWS), and 304–324 (LANV…WHAL).

This sequence belongs to the PsbB/PsbC family. IsiA/Pcb subfamily. The antenna complex consists of divinyl chlorophylls (a and b) and divinyl chlorophyll a/b binding proteins and binds more divinyl chlorophyll b than does the antenna complex from high-light-adapted Prochlorococcus. Requires divinyl chlorophyll a as cofactor. It depends on divinyl chlorophyll b as a cofactor.

The protein resides in the cellular thylakoid membrane. Its function is as follows. The antenna complex functions as a light receptor, it captures and delivers excitation energy to photosystems II and I. The Prochlorales pcb genes are not related to higher plant LHCs. In Prochlorococcus marinus (strain NATL2A), this protein is Divinyl chlorophyll a/b light-harvesting protein PcbA (pcbA).